The primary structure comprises 272 residues: Phosphonates import ATP-binding protein PhnC (272 aa).

One can recognise an ABC transporter domain in the interval 2 to 246 (LELQRLTKTY…VLATIYGAED (245 aa)). An ATP-binding site is contributed by 35–42 (GPSGAGKS). The tract at residues 248–272 (ASSGREPAPEREPEDTERHLAEVGR) is disordered. The segment covering 254-272 (PAPEREPEDTERHLAEVGR) has biased composition (basic and acidic residues).

The protein belongs to the ABC transporter superfamily. Phosphonates importer (TC 3.A.1.9.1) family. In terms of assembly, the complex is composed of two ATP-binding proteins (PhnC), two transmembrane proteins (PhnE) and a solute-binding protein (PhnD).

The protein resides in the cell inner membrane. It carries out the reaction phosphonate(out) + ATP + H2O = phosphonate(in) + ADP + phosphate + H(+). Functionally, part of the ABC transporter complex PhnCDE involved in phosphonates import. Responsible for energy coupling to the transport system. In Chromohalobacter salexigens (strain ATCC BAA-138 / DSM 3043 / CIP 106854 / NCIMB 13768 / 1H11), this protein is Phosphonates import ATP-binding protein PhnC.